We begin with the raw amino-acid sequence, 136 residues long: Large ribosomal subunit protein bL17 (136 aa).

Belongs to the bacterial ribosomal protein bL17 family. Part of the 50S ribosomal subunit. Contacts protein L32.

This chain is Large ribosomal subunit protein bL17, found in Rickettsia canadensis (strain McKiel).